We begin with the raw amino-acid sequence, 500 residues long: Ephrin type-B receptor 3 (500 aa).

Positions 1–64 constitute a Fibronectin type-III domain; it reads PLLVLDLIIQ…NPVDFSTSLY (64 aa). Topologically, residues 1-113 are extracellular; the sequence is PLLVLDLIIQ…ERSVQDLLPL (113 aa). The interval 76-103 is disordered; sequence HLRRREELTTTTTGLKSREERFQKSDDP. A compositionally biased stretch (basic and acidic residues) spans 91–103; sequence KSREERFQKSDDP. A helical membrane pass occupies residues 114–134; sequence IVGSASAGFVVILAMIVIAVV. Topologically, residues 135 to 500 are cytoplasmic; the sequence is CLRRQRTGSE…QMSQTLPIRV (366 aa). Tyrosine 168 is modified (phosphotyrosine; by autocatalysis). Residues 187–450 enclose the Protein kinase domain; the sequence is VKIEEVIGAG…QIVSTLDKFL (264 aa). Residues 193 to 201 and lysine 219 each bind ATP; that span reads IGAGEFGEV. Aspartate 312 functions as the Proton acceptor in the catalytic mechanism. An SAM domain is found at 421 to 500; that stretch reads LHQLMLECWV…QMSQTLPIRV (80 aa). The PDZ-binding motif lies at 498 to 500; sequence IRV.

Belongs to the protein kinase superfamily. Tyr protein kinase family. Ephrin receptor subfamily. In terms of assembly, heterotetramer upon binding of the ligand. The heterotetramer is composed of an ephrin dimer and a receptor dimer. Oligomerization is probably required to induce biological responses. In terms of processing, phosphorylated. Autophosphorylates upon ligand-binding. Autophosphorylation on Tyr-168 is required for interaction with SH2 domain-containing proteins. In terms of tissue distribution, widely expressed in the developing nervous system.

The protein resides in the cell membrane. The protein localises to the cell projection. It is found in the dendrite. It catalyses the reaction L-tyrosyl-[protein] + ATP = O-phospho-L-tyrosyl-[protein] + ADP + H(+). In terms of biological role, receptor tyrosine kinase which binds promiscuously transmembrane ephrin-B family ligands residing on adjacent cells, leading to contact-dependent bidirectional signaling into neighboring cells. The signaling pathway downstream of the receptor is referred to as forward signaling while the signaling pathway downstream of the ephrin ligand is referred to as reverse signaling. Generally has an overlapping and redundant function with EPHB2. Like EPHB2, functions in axon guidance during development. In addition to its role in axon guidance also plays an important redundant role with other ephrin-B receptors in development and maturation of dendritic spines and the formation of excitatory synapses. May control other aspects of development through regulation of cell migration and positioning. May play a role in early pattern formation within the developing nervous system. This is Ephrin type-B receptor 3 (ephb3) from Danio rerio (Zebrafish).